Reading from the N-terminus, the 100-residue chain is Urease subunit gamma (100 aa).

The protein belongs to the urease gamma subunit family. In terms of assembly, heterotrimer of UreA (gamma), UreB (beta) and UreC (alpha) subunits. Three heterotrimers associate to form the active enzyme.

The protein resides in the cytoplasm. The enzyme catalyses urea + 2 H2O + H(+) = hydrogencarbonate + 2 NH4(+). It functions in the pathway nitrogen metabolism; urea degradation; CO(2) and NH(3) from urea (urease route): step 1/1. The chain is Urease subunit gamma from Limosilactobacillus fermentum (Lactobacillus fermentum).